We begin with the raw amino-acid sequence, 198 residues long: Single-stranded DNA cytosine deaminase (198 aa).

The Bipartite nuclear localization signal signature appears at 1-30 (MDSLLMKQKKFLYHFKNVRWAKGRHETYLC). Positions 2-26 (DSLLMKQKKFLYHFKNVRWAKGRHE) are interaction with SUPT6H. The CMP/dCMP-type deaminase domain maps to 23 to 129 (GRHETYLCYV…KAEPEGLRRL (107 aa)). The residue at position 27 (Thr27) is a Phosphothreonine; by PKA. Ser38 is subject to Phosphoserine; by PKA. The tract at residues 39–42 (ATSC) is important for interaction with CTNNBL1. His56 provides a ligand contact to Zn(2+). Glu58 functions as the Proton donor in the catalytic mechanism. Zn(2+) is bound by residues Cys87 and Cys90. Residues 88-116 (YDCARHVAEFLRWNPNLSLRIFTARLYFC) form a required for interaction with RNF126 region. The Nuclear export signal motif lies at 183 to 198 (LYEVDDLRDAFRMLGF).

The protein belongs to the cytidine and deoxycytidylate deaminase family. As to quaternary structure, interacts with CTNNBL1; the interaction is important for the immunoglobulin switch activity of AICDA. Interacts (via its NLS) with KPNA1. Interacts with PKA/PRKACA and PRKAR1A/PKR1. Interacts with SUPT6H, TRIM28 and NCL. Directly interacts with MCM3AP/GANP; this interaction may favor AICDA recruitment to immunoglobulin variable region genes, hence promoting somatic hypermutations. It depends on Zn(2+) as a cofactor. Post-translationally, ser-38 is the major site whereas Thr-27 is the minor site of phosphorylation. Phosphorylation regulates its class-switch recombination activity. Probably monoubiquitinated on several residues by RNF126. In terms of tissue distribution, expressed in germinal center B-cells (at protein level).

The protein localises to the nucleus. It localises to the cytoplasm. It catalyses the reaction a 2'-deoxycytidine in single-stranded DNA + H2O + H(+) = a 2'-deoxyuridine in single-stranded DNA + NH4(+). Single-stranded DNA-specific cytidine deaminase. Involved in somatic hypermutation (SHM), gene conversion, and class-switch recombination (CSR) in B-lymphocytes by deaminating C to U during transcription of Ig-variable (V) and Ig-switch (S) region DNA. Required for several crucial steps of B-cell terminal differentiation necessary for efficient antibody responses. May also play a role in the epigenetic regulation of gene expression by participating in DNA demethylation. This Mus musculus (Mouse) protein is Single-stranded DNA cytosine deaminase (Aicda).